Reading from the N-terminus, the 561-residue chain is DNA ligase B (561 aa).

Catalysis depends on Lys125, which acts as the N6-AMP-lysine intermediate.

It belongs to the NAD-dependent DNA ligase family. LigB subfamily.

The enzyme catalyses NAD(+) + (deoxyribonucleotide)n-3'-hydroxyl + 5'-phospho-(deoxyribonucleotide)m = (deoxyribonucleotide)n+m + AMP + beta-nicotinamide D-nucleotide.. In terms of biological role, catalyzes the formation of phosphodiester linkages between 5'-phosphoryl and 3'-hydroxyl groups in double-stranded DNA using NAD as a coenzyme and as the energy source for the reaction. The chain is DNA ligase B from Salmonella paratyphi A (strain AKU_12601).